The following is a 370-amino-acid chain: Dual-specificity RNA methyltransferase RlmN (370 aa).

Glutamate 93 functions as the Proton acceptor in the catalytic mechanism. The 239-residue stretch at 99-337 (AEGRGTLCVS…VTTVRKTRGD (239 aa)) folds into the Radical SAM core domain. A disulfide bond links cysteine 106 and cysteine 343. [4Fe-4S] cluster contacts are provided by cysteine 113, cysteine 117, and cysteine 120. S-adenosyl-L-methionine-binding positions include 167–168 (GE), serine 199, 221–223 (SLH), and asparagine 300. Cysteine 343 serves as the catalytic S-methylcysteine intermediate.

The protein belongs to the radical SAM superfamily. RlmN family. [4Fe-4S] cluster is required as a cofactor.

It localises to the cytoplasm. It catalyses the reaction adenosine(2503) in 23S rRNA + 2 reduced [2Fe-2S]-[ferredoxin] + 2 S-adenosyl-L-methionine = 2-methyladenosine(2503) in 23S rRNA + 5'-deoxyadenosine + L-methionine + 2 oxidized [2Fe-2S]-[ferredoxin] + S-adenosyl-L-homocysteine. The enzyme catalyses adenosine(37) in tRNA + 2 reduced [2Fe-2S]-[ferredoxin] + 2 S-adenosyl-L-methionine = 2-methyladenosine(37) in tRNA + 5'-deoxyadenosine + L-methionine + 2 oxidized [2Fe-2S]-[ferredoxin] + S-adenosyl-L-homocysteine. Specifically methylates position 2 of adenine 2503 in 23S rRNA and position 2 of adenine 37 in tRNAs. m2A2503 modification seems to play a crucial role in the proofreading step occurring at the peptidyl transferase center and thus would serve to optimize ribosomal fidelity. This Francisella tularensis subsp. tularensis (strain FSC 198) protein is Dual-specificity RNA methyltransferase RlmN.